A 395-amino-acid polypeptide reads, in one-letter code: Phosphoprotein (395 aa).

The interval 178 to 217 (NGVLHGSEIRSKSSSGVIPGVPQSRPQLASSPAHADPAPA) is disordered. A compositionally biased stretch (low complexity) spans 206 to 217 (ASSPAHADPAPA). The segment at 220–283 (ENVKEIIELL…ITTIKIMDPS (64 aa)) is multimerization.

The protein belongs to the rubulavirus/avulavirus P protein family. Homotetramer. Interacts (via multimerization domain) with polymerase L; this interaction forms the polymerase L-P complex. Interacts (via N-terminus) with N0 (via Ncore); this interaction allows P to chaperon N0 to avoid N polymerization before encapsidation. Interacts (via C-terminus) with N-RNA template; this interaction positions the polymerase on the template for both transcription and replication. Interacts with host ARHGAP26; this interaction promotes host RHOA activation. Interacts with host KPNA1 and KPNA6.

It localises to the host cytoplasm. In terms of biological role, essential cofactor of the RNA polymerase L that plays a central role in the transcription and replication by forming the polymerase complex with RNA polymerase L and recruiting L to the genomic N-RNA template for RNA synthesis. Also plays a central role in the encapsidation of nascent RNA chains by forming the encapsidation complex with the nucleocapsid protein N (N-P complex). Acts as a chaperone for newly synthesized free N protein, so-called N0, allowing encapsidation of nascent RNA chains during replication. The nucleoprotein protein N prevents excessive phosphorylation of P, which leads to down-regulation of viral transcription/ replication. Participates, together with N, in the formation of viral factories (viroplasms), which are large inclusions in the host cytoplasm where replication takes place. Also plays a role in viral growth by promoting host RHOA activation and thus actin formation via ARHGAP26 inhibition. The polypeptide is Phosphoprotein (P/V) (Homo sapiens (Human)).